A 327-amino-acid polypeptide reads, in one-letter code: Cobalamin biosynthesis protein CobD (327 aa).

4 helical membrane passes run 60-80, 82-102, 159-179, and 304-324; these read GMWLTIGLVMACVVLGLVLEL, LPFAGTAGAVAEILIVTVLLA, DGIVAPAFWFLVGGLPGLFAY, and LFWSTMSLMTGLVIAASLIGL.

Belongs to the CobD/CbiB family.

The protein localises to the cell membrane. It participates in cofactor biosynthesis; adenosylcobalamin biosynthesis. In terms of biological role, converts cobyric acid to cobinamide by the addition of aminopropanol on the F carboxylic group. The chain is Cobalamin biosynthesis protein CobD from Brucella anthropi (strain ATCC 49188 / DSM 6882 / CCUG 24695 / JCM 21032 / LMG 3331 / NBRC 15819 / NCTC 12168 / Alc 37) (Ochrobactrum anthropi).